Reading from the N-terminus, the 501-residue chain is Alveolysin (501 aa).

Residues Met1 to Ala32 form the signal peptide. The next 4 beta stranded transmembrane spans lie at Gln191 to Val204, Ile211 to Glu220, Ser289 to Leu298, and Gln306 to Ser318. Residues Glu460 to Arg470 carry the Conserved undecapeptide motif. Residues Thr492 to Leu493 carry the Cholesterol binding motif.

Belongs to the cholesterol-dependent cytolysin family. As to quaternary structure, homooligomeric pore complex of 35 to 50 subunits; when inserted in the host membrane.

Its subcellular location is the secreted. It is found in the host cell membrane. Its activity is regulated as follows. Inhibited by cholesterol and thiol reagents. A cholesterol-dependent toxin that causes cytolysis by forming pores in cholesterol containing host membranes. After binding to target membranes, the protein undergoes a major conformation change, leading to its insertion in the host membrane and formation of an oligomeric pore complex. Cholesterol is required for binding to host cell membranes, membrane insertion and pore formation; cholesterol binding is mediated by a Thr-Leu pair in the C-terminus. Can be reversibly inactivated by oxidation. In Paenibacillus alvei (Bacillus alvei), this protein is Alveolysin (alv).